A 281-amino-acid chain; its full sequence is Inhibitor of growth protein 2 (281 aa).

A coiled-coil region spans residues 49–101 (VLRELDNKYQETLKEIDDVYEKYKKEDDSNQKKRLQQHLQRALINSQELGDEK). The disordered stretch occupies residues 123–204 (SQCFQDPAES…AKQEREASPV (82 aa)). Over residues 131-141 (ESERASDKSKM) the composition is skewed to basic and acidic residues. Residues 182-194 (KRSKSAKKKKRSK) show a composition bias toward basic residues. Residue lysine 196 forms a Glycyl lysine isopeptide (Lys-Gly) (interchain with G-Cter in SUMO1) linkage. The PHD-type zinc finger occupies 213-262 (PTYCLCNQVSYGEMIGCDNEQCPIEWFHFSCVSLTYKPKGKWYCPKCRGD). Positions 216, 218, 229, 234, 240, 243, 256, and 259 each coordinate Zn(2+). Basic and acidic residues predominate over residues 261-275 (GDNEKTMDKSTEKTK). The segment at 261–281 (GDNEKTMDKSTEKTKKERRAR) is disordered. The tract at residues 265–281 (KTMDKSTEKTKKERRAR) is PBR.

This sequence belongs to the ING family. As to quaternary structure, interacts with H3K4me3 and to a lesser extent with H3K4me2. Component of a mSin3A-like complex at least consisting of SIN3A, HDAC1, HDAC2, RBBP4/RbAp48, RBBP7/RbAp46, SAP30 and ING2. In terms of processing, sumoylation enhances its association with SIN3A and is required for binding to some target gene promoters, this is the case for TMEM71.

The protein localises to the nucleus. In terms of biological role, seems to be involved in p53/TP53 activation and p53/TP53-dependent apoptotic pathways, probably by enhancing acetylation of p53/TP53. Component of a mSin3A-like corepressor complex, which is probably involved in deacetylation of nucleosomal histones. ING2 activity seems to be modulated by binding to phosphoinositides (PtdInsPs). The sequence is that of Inhibitor of growth protein 2 (Ing2) from Mus musculus (Mouse).